The following is a 409-amino-acid chain: uncharacterized protein (409 aa).

The signal sequence occupies residues 1–29 (MARSRCVHRVVHQAACIGVIGLSTSALTT). Cys30 is lipidated: N-palmitoyl cysteine. Cys30 carries the S-diacylglycerol cysteine lipid modification.

Belongs to the TP013X lipoprotein family.

The protein localises to the cell membrane. This is an uncharacterized protein from Treponema pallidum (strain Nichols).